A 911-amino-acid chain; its full sequence is Chitin synthase G (911 aa).

Disordered stretches follow at residues 1–66 (MAYQ…VSGY) and 107–138 (GRVA…GGLR). Over residues 12–34 (PHYDDNGHRLQDLPHGSYEEEAS) the composition is skewed to basic and acidic residues. Residues 54–66 (QHGSSTTRPVSGY) are compositionally biased toward polar residues. 6 helical membrane-spanning segments follow: residues 579-599 (IFST…TTVI), 624-644 (IINT…FILA), 659-679 (SFVV…YLVV), 711-731 (IIII…FMYL), 840-860 (LVTF…SDGV), and 879-899 (ALLW…CWFL).

It belongs to the chitin synthase family. Class III subfamily.

The protein localises to the cell membrane. It carries out the reaction [(1-&gt;4)-N-acetyl-beta-D-glucosaminyl](n) + UDP-N-acetyl-alpha-D-glucosamine = [(1-&gt;4)-N-acetyl-beta-D-glucosaminyl](n+1) + UDP + H(+). Functionally, polymerizes chitin, a structural polymer of the cell wall and septum, by transferring the sugar moiety of UDP-GlcNAc to the non-reducing end of the growing chitin polymer. This is Chitin synthase G (chsG) from Aspergillus fumigatus (strain ATCC MYA-4609 / CBS 101355 / FGSC A1100 / Af293) (Neosartorya fumigata).